Reading from the N-terminus, the 1272-residue chain is AF4/FMR2 family member 2 (1272 aa).

Disordered stretches follow at residues 93-183 and 200-223; these read IPKN…LTQD and PQIG…SSGE. The segment covering 97 to 107 has biased composition (polar residues); it reads SVPQNPNNKNE. Basic and acidic residues predominate over residues 151-160; that stretch reads SKPEWSRDSH. Residues 161–183 are compositionally biased toward polar residues; that stretch reads NPSTVLASQASGQPNKMQTLTQD. Residues 212–223 show a composition bias toward basic and acidic residues; sequence AKEDSNPKSSGE. The residue at position 391 (S391) is a Phosphoserine. Disordered stretches follow at residues 418–491, 535–687, 779–829, and 842–903; these read KAKP…KWQL, TNAS…DQEE, SLHA…PEKK, and PPCI…QDKN. A compositionally biased stretch (pro residues) spans 426-438; it reads VNPPLATPQPPPA. Over residues 439 to 452 the composition is skewed to low complexity; that stretch reads VQASGGSGSSSESE. T478 is subject to Phosphothreonine. Positions 543 to 558 are enriched in basic and acidic residues; that stretch reads EPKERPLLSLIREKAR. The segment covering 576–586 has biased composition (polar residues); the sequence is STTSETVSQRT. Positions 616 to 629 are enriched in basic and acidic residues; the sequence is PKEKESVELHDPPR. Positions 630-640 are enriched in basic residues; it reads GRNKATAHKPA. Residues 818 to 829 show a composition bias toward basic and acidic residues; it reads PTEVAEKIPEKK. 2 stretches are compositionally biased toward pro residues: residues 844–853 and 874–883; these read CISPAPPHKP and FPPPLSPLPE.

This sequence belongs to the AF4 family.

Its subcellular location is the nucleus speckle. Functionally, RNA-binding protein. Might be involved in alternative splicing regulation through an interaction with G-quartet RNA structure. This chain is AF4/FMR2 family member 2 (AFF2), found in Pongo pygmaeus (Bornean orangutan).